A 492-amino-acid polypeptide reads, in one-letter code: Bifunctional protein GlmU (492 aa).

A pyrophosphorylase region spans residues 1 to 241; the sequence is MTFRGDTAVV…SALVAGVNDR (241 aa). Residues 12 to 15, K26, Q83, and 88 to 89 each bind UDP-N-acetyl-alpha-D-glucosamine; these read LAAG and GT. A Mg(2+)-binding site is contributed by D114. 4 residues coordinate UDP-N-acetyl-alpha-D-glucosamine: G151, E166, N181, and N239. Residue N239 participates in Mg(2+) binding. Residues 242-262 form a linker region; it reads VQLAQLGAELNRRIVAAHQMA. The tract at residues 263–492 is N-acetyltransferase; sequence GVTVIDPATT…TPPPDADQTP (230 aa). Residues R344 and K362 each coordinate UDP-N-acetyl-alpha-D-glucosamine. H374 serves as the catalytic Proton acceptor. 2 residues coordinate UDP-N-acetyl-alpha-D-glucosamine: Y377 and N388. Acetyl-CoA contacts are provided by residues A391, 397–398, and A434; that span reads NY. Residues 451 to 492 form a disordered region; the sequence is GGPQRNIEDWVQQKRPGTPSAEAARKASAEQSTPPPDADQTP. The span at 483-492 shows a compositional bias: pro residues; it reads TPPPDADQTP.

This sequence in the N-terminal section; belongs to the N-acetylglucosamine-1-phosphate uridyltransferase family. It in the C-terminal section; belongs to the transferase hexapeptide repeat family. Homotrimer. Requires Mg(2+) as cofactor.

The protein localises to the cytoplasm. It catalyses the reaction alpha-D-glucosamine 1-phosphate + acetyl-CoA = N-acetyl-alpha-D-glucosamine 1-phosphate + CoA + H(+). The enzyme catalyses N-acetyl-alpha-D-glucosamine 1-phosphate + UTP + H(+) = UDP-N-acetyl-alpha-D-glucosamine + diphosphate. The protein operates within nucleotide-sugar biosynthesis; UDP-N-acetyl-alpha-D-glucosamine biosynthesis; N-acetyl-alpha-D-glucosamine 1-phosphate from alpha-D-glucosamine 6-phosphate (route II): step 2/2. Its pathway is nucleotide-sugar biosynthesis; UDP-N-acetyl-alpha-D-glucosamine biosynthesis; UDP-N-acetyl-alpha-D-glucosamine from N-acetyl-alpha-D-glucosamine 1-phosphate: step 1/1. It functions in the pathway bacterial outer membrane biogenesis; LPS lipid A biosynthesis. Its function is as follows. Catalyzes the last two sequential reactions in the de novo biosynthetic pathway for UDP-N-acetylglucosamine (UDP-GlcNAc). The C-terminal domain catalyzes the transfer of acetyl group from acetyl coenzyme A to glucosamine-1-phosphate (GlcN-1-P) to produce N-acetylglucosamine-1-phosphate (GlcNAc-1-P), which is converted into UDP-GlcNAc by the transfer of uridine 5-monophosphate (from uridine 5-triphosphate), a reaction catalyzed by the N-terminal domain. This is Bifunctional protein GlmU from Mycobacterium marinum (strain ATCC BAA-535 / M).